The following is a 181-amino-acid chain: Transcription termination/antitermination protein NusG (181 aa).

In terms of domain architecture, KOW spans 130 to 161 (PGEMIRVNDGPFADFNGVVEEVDYEKSRLKVS).

Belongs to the NusG family. Monomer. Interacts with the transcription termination factor Rho and with RNA polymerase.

Its function is as follows. Participates in transcription elongation, termination and antitermination. In the absence of Rho, increases the rate of transcription elongation by the RNA polymerase (RNAP), probably by partially suppressing pausing. In the presence of Rho, modulates most Rho-dependent termination events by interacting with the RNAP to render the complex more susceptible to the termination activity of Rho. May be required to overcome a kinetic limitation of Rho to function at certain terminators. Also involved in ribosomal RNA transcriptional antitermination. The chain is Transcription termination/antitermination protein NusG from Buchnera aphidicola subsp. Acyrthosiphon pisum (strain APS) (Acyrthosiphon pisum symbiotic bacterium).